The chain runs to 475 residues: MDPFILYSLAFALVYISLYFIFKGNYSNNKHTNLPLGSNGWPILGENIDMAYSSSPEKFIHERMEKHSSQVFKTSLLGQKIAIFCGTSGNKFLFSNENKLLTTWWPPSLTKPLMCPTQSQSQNSVKEIALLNRGFLREILKPENLKQYIPFMDSMARDHLKQEWIPFKEVKIYPLVKKYTFSLACKLFLSIDDFRHVKKLSDPFVLVTSGMFTVPINLPGTPYNRAIKGGKMVHEELMKIIKERKINEKNNHSNDLLSQLISFSDENGQFMNDAEIYNNIIGLLVASYDTTSAAITFVLKYLAELPNIFNEVYKEQMEIAKSKGEGELLNWDDIQKMKYSWNVACEAIRLMPPAQGAFREAITDFTFGGFTVPKGWKTFWSVYSTHKNPKYFPEPEKFDPCRFEGSGPEPYTFVPFGGGPRMCPGKEYARLEILVFMYNIVTNFKLEKLVPHEKIIYKSSPVPLNGLPVRIQPIA.

The chain crosses the membrane as a helical span at residues 6 to 22 (LYSLAFALVYISLYFIF). Cys423 is a heme binding site.

It belongs to the cytochrome P450 family. Heme serves as cofactor. As to expression, specifically expressed in roots.

Its subcellular location is the membrane. The enzyme catalyses beta-amyrin + reduced [NADPH--hemoprotein reductase] + O2 = daturadiol + oxidized [NADPH--hemoprotein reductase] + H2O + H(+). Its function is as follows. Catalyzes the C-6 beta-hydroxylation of beta-amyrin to form daturadiol. Catalyzes the C-6 beta-hydroxylation of alpha-amyrin to form 6-beta-hydroxy-alpha-amyrin. The protein is Beta-amyrin 6-beta-monooxygenase of Solanum lycopersicum (Tomato).